The chain runs to 155 residues: Aspartate carbamoyltransferase regulatory chain (155 aa).

Zn(2+) contacts are provided by Cys-113, Cys-118, Cys-141, and Cys-144.

The protein belongs to the PyrI family. Contains catalytic and regulatory chains. Zn(2+) serves as cofactor.

In terms of biological role, involved in allosteric regulation of aspartate carbamoyltransferase. In Methanococcus aeolicus (strain ATCC BAA-1280 / DSM 17508 / OCM 812 / Nankai-3), this protein is Aspartate carbamoyltransferase regulatory chain.